The sequence spans 1211 residues: MASQLQVFSPPSVSSSAFCSAKKLKIEPSGWDVSGQSSNDKYYTHSKTLPATQGQASSSHQVANFNIPAYDQGLLLQAPAVEHIVVTAADSSGSAATATFQSSQTLTHRSNVSLLEPYQKCGLKRKSEEVDSNGSVQIIEEHPPLMLQNRTVVGAAATTTTVTTKSSSSSGEGDYQLVQHEILCSMTNSYEVLEFLGRGTFGQVAKCWKRSTKEIVAIKILKNHPSYARQGQIEVSILSRLSSENADEYNFVRSYECFQHKNHTCLVFEMLEQNLYDFLKQNKFSPLPLKYIRPILQQVATALMKLKSLGLIHADLKPENIMLVDPVRQPYRVKVIDFGSASHVSKAVCSTYLQSRYYRAPEIILGLPFCEAIDMWSLGCVIAELFLGWPLYPGASEYDQIRYISQTQGLPAEYLLSAGTKTTRFFNRDPNLGYPLWRLKTPEEHELETGIKSKEARKYIFNCLDDMAQVNMSTDLEGTDMLAEKADRREYIDLLKKMLTIDADKRVTPLKTLNHQFVTMTHLLDFPHSNHVKSCFQNMEICKRRVHMYDTVSQIKSPFTTHVAPSTSTNLTMSFSNQLSTVHNQASVLASSSTAAAATLSLANSDVSLLNYQSALYPPSAAPVPGVAQQGVSLQPGTTQICTQTDPFQQTFIVCPPAFQTGLQATTKHSGFPVRMDNAVPLVPQAPAAQPLQIQSGVLTQGSCTPLMVATLHPQVATITPQYAVPFTLSCAAGRPALVEQTAAVQQAWPGGTQQILLPSAWQQLPGVALHNSVQPTAVIPEAMGSSQQLADWRNAHSHGNQYSTIMQQPSLLTNHVTLATAQPLNVGVAHVVRQQQSSSLPSRKNKQSAPVSSTSSLEVLPSQVYSLVGSSPLRTTSSYNSLVPVQDQHQPIIIPDTPSPPVSVITIRSDTDEEEDNKFKPSSSSLKARSNVISYVTVNDSPDSDSSLSSPYPTDTLSALRGNSGTLLEGPGRTAADGIGTRTIIVPPLKTQLGDCTGATQASGLLSSSKTKPVASVSGQSSGCCITPTGYRAQRGGASAVQPLNLSQNQQSSSASTSQERSSNPAPRRQQAFVAPLSQAPYAFQHGSPLHSTGHPHLAPAPAHLPSQPHLYTYAAPTSAAALGSTSSIAHLFSPQGSSRHAAAYTTHPSTLVHQVPVSVGPSLLTSASVAPAQYQHQFATQSYIGSSRGSTIYTGYPLSPTKISQYSYL.

Lys25 participates in a covalent cross-link: Glycyl lysine isopeptide (Lys-Gly) (interchain with G-Cter in SUMO); alternate. Lys25 participates in a covalent cross-link: Glycyl lysine isopeptide (Lys-Gly) (interchain with G-Cter in SUMO2); alternate. Residues Lys120 and Lys124 each participate in a glycyl lysine isopeptide (Lys-Gly) (interchain with G-Cter in SUMO2) cross-link. The 329-residue stretch at 190-518 (YEVLEFLGRG…PLKTLNHQFV (329 aa)) folds into the Protein kinase domain. ATP-binding positions include 196 to 204 (LGRGTFGQV) and Lys219. The active-site Proton acceptor is Asp315. Residues 835–856 (QQQSSSLPSRKNKQSAPVSSTS) are disordered. The short motif at 844–847 (RKNK) is the Nuclear localization signal 1 (NLS1) element. At Ser872 the chain carries Phosphoserine. The segment at 885 to 1094 (PVQDQHQPII…FQHGSPLHST (210 aa)) is interaction with TP53. The required for localization to nuclear speckles stretch occupies residues 891-998 (QPIIIPDTPS…PLKTQLGDCT (108 aa)). Residues 902 to 926 (PVSVITIRSDTDEEEDNKFKPSSSS) are SUMO interaction motifs (SIM); required for nuclear localization and kinase activity. Residue Lys991 forms a Glycyl lysine isopeptide (Lys-Gly) (interchain with G-Cter in SUMO2) linkage. 3 disordered regions span residues 1002-1023 (QASG…GQSS), 1047-1070 (LSQN…APRR), and 1085-1105 (FQHG…APAH). Composition is skewed to low complexity over residues 1048–1064 (SQNQ…ERSS) and 1096–1105 (HPHLAPAPAH). Ser1201 is modified (phosphoserine). Lys1204 is covalently cross-linked (Glycyl lysine isopeptide (Lys-Gly) (interchain with G-Cter in SUMO)).

It belongs to the protein kinase superfamily. CMGC Ser/Thr protein kinase family. HIPK subfamily. In terms of assembly, interacts with Nkx1-2, Nkx2-5, MYB, PARK7, DAXX and p53/TP53. Part of a cytoplasmic complex made of HIPK1, DAB2IP and MAP3K5 in response to TNF. This complex formation promotes MAP3K5-JNK activation and subsequent apoptosis. In terms of processing, phosphorylated and activated by JNK1. Autophosphorylated. Sumoylated. When conjugated it is directed to nuclear speckles. SENP1-mediated desumoylation is mediated by TNF in response to stress stimuli, triggering transient translocation from nucleus to cytoplasm.

Its subcellular location is the nucleus. It is found in the cytoplasm. The protein localises to the nucleus speckle. The enzyme catalyses L-seryl-[protein] + ATP = O-phospho-L-seryl-[protein] + ADP + H(+). It catalyses the reaction L-threonyl-[protein] + ATP = O-phospho-L-threonyl-[protein] + ADP + H(+). Serine/threonine-protein kinase involved in transcription regulation and TNF-mediated cellular apoptosis. Plays a role as a corepressor for homeodomain transcription factors. Phosphorylates DAXX and MYB. Phosphorylates DAXX in response to stress, and mediates its translocation from the nucleus to the cytoplasm. Inactivates MYB transcription factor activity by phosphorylation. Prevents MAP3K5-JNK activation in the absence of TNF. TNF triggers its translocation to the cytoplasm in response to stress stimuli, thus activating nuclear MAP3K5-JNK by derepression and promoting apoptosis. May be involved in anti-oxidative stress responses. Involved in the regulation of eye size, lens formation and retinal lamination during late embryogenesis. Promotes angiogenesis and to be involved in erythroid differentiation. May be involved in malignant squamous cell tumor formation. Phosphorylates PAGE4 at 'Thr-51' which is critical for the ability of PAGE4 to potentiate the transcriptional activator activity of JUN. The chain is Homeodomain-interacting protein kinase 1 from Rattus norvegicus (Rat).